Reading from the N-terminus, the 269-residue chain is Monofunctional glycosyltransferase (269 aa).

A helical transmembrane segment spans residues 46-66; it reads AIITILILLIIFFGVMYFISS.

The protein belongs to the glycosyltransferase 51 family.

It is found in the cell membrane. The catalysed reaction is [GlcNAc-(1-&gt;4)-Mur2Ac(oyl-L-Ala-gamma-D-Glu-L-Lys-D-Ala-D-Ala)](n)-di-trans,octa-cis-undecaprenyl diphosphate + beta-D-GlcNAc-(1-&gt;4)-Mur2Ac(oyl-L-Ala-gamma-D-Glu-L-Lys-D-Ala-D-Ala)-di-trans,octa-cis-undecaprenyl diphosphate = [GlcNAc-(1-&gt;4)-Mur2Ac(oyl-L-Ala-gamma-D-Glu-L-Lys-D-Ala-D-Ala)](n+1)-di-trans,octa-cis-undecaprenyl diphosphate + di-trans,octa-cis-undecaprenyl diphosphate + H(+). Its pathway is cell wall biogenesis; peptidoglycan biosynthesis. In terms of biological role, peptidoglycan polymerase that catalyzes glycan chain elongation using lipid-linked disaccharide-pentapeptide as the substrate. The chain is Monofunctional glycosyltransferase from Staphylococcus epidermidis (strain ATCC 35984 / DSM 28319 / BCRC 17069 / CCUG 31568 / BM 3577 / RP62A).